The primary structure comprises 221 residues: Transcription factor bHLH126 (221 aa).

Disordered regions lie at residues Met1–Leu46 and Arg104–Ser132. Residues Lys42–Thr94 form the bHLH domain.

In terms of assembly, homodimer.

The protein localises to the nucleus. The protein is Transcription factor bHLH126 (BHLH126) of Arabidopsis thaliana (Mouse-ear cress).